The chain runs to 373 residues: Tomoregulin-1 (373 aa).

The signal sequence occupies residues 1 to 36 (MGAQAPLRLPAAPPLAVCGYTSVLLLFAFCLPGSGA). Residues 37 to 323 (SNQPAGGGGD…VPSRQKLTHV (287 aa)) are Extracellular-facing. An N-linked (GlcNAc...) asparagine glycan is attached at N56. The 48-residue stretch at 91–138 (ACQFQCHTNYIPVCGSNGDTYQNECFLRRAACKHQKDITVVARGPCYS) folds into the Kazal-like 1 domain. Intrachain disulfides connect C92/C122, C96/C115, and C104/C136. The N-linked (GlcNAc...) asparagine glycan is linked to N140. The tract at residues 140–162 (NGSGSGEGEEEGSGAGAHRKHSK) is disordered. In terms of domain architecture, Kazal-like 2 spans 182–230 (VCNIDCSGYSFNPVCASDGSSYNNPCFVREASCIRQEQIDIRHLGHCTD). Intrachain disulfides connect C183–C214, C187–C207, C196–C228, C268–C281, C276–C292, and C294–C303. The 41-residue stretch at 264–304 (SHMPCPENLNGYCIHGKCEFIYSTQKASCRCESGYTGQHCE) folds into the EGF-like domain. A helical transmembrane segment spans residues 324 to 344 (LIAAIIGAVQIAIIVAIVMCI). Topologically, residues 345–373 (TRKCPKNNRGRRQKQNLGHFTSETSSRMV) are cytoplasmic. The interval 352–373 (NRGRRQKQNLGHFTSETSSRMV) is disordered. Positions 359-373 (QNLGHFTSETSSRMV) are enriched in polar residues.

Belongs to the tomoregulin family. In terms of assembly, may interact with ST14.

The protein resides in the cell membrane. Its function is as follows. Neuron-specific restriction factor that prevents herpes simplex virus 1 (HHV-1) infection in the brain by blocking viral entry. Also able to restrict herpes simplex virus 2 (HHV-2) infection, although to a lesser extent. Acts by preventing the association between the viral glycoprotein D (gD) and its cell surface receptor NECTIN1, thereby inhibiting fusion of the virus and the cell membrane. Also able to prevent the association between the viral glycoprotein B (gB) and MYH9/NMMHC-IIA and MYH10/NMMHC-IIB receptors. This is Tomoregulin-1 (Tmeff1) from Rattus norvegicus (Rat).